The following is a 120-amino-acid chain: HTH-type transcriptional regulator MerD (120 aa).

The HTH merR-type domain occupies 3–72 (AYTVSQLAHN…LDALARLCRA (70 aa)). A DNA-binding region (H-T-H motif) is located at residues 6 to 25 (VSQLAHNAGVSVHIVRDYLV).

The sequence is that of HTH-type transcriptional regulator MerD (merD) from Shigella flexneri.